Reading from the N-terminus, the 507-residue chain is ATP synthase subunit alpha, chloroplastic (507 aa).

Position 170 to 177 (170 to 177 (GDRQTGKT)) interacts with ATP. The residue at position 257 (Thr-257) is a Phosphothreonine.

The protein belongs to the ATPase alpha/beta chains family. In terms of assembly, F-type ATPases have 2 components, CF(1) - the catalytic core - and CF(0) - the membrane proton channel. CF(1) has five subunits: alpha(3), beta(3), gamma(1), delta(1), epsilon(1). CF(0) has four main subunits: a, b, b' and c.

The protein resides in the plastid. Its subcellular location is the chloroplast thylakoid membrane. The enzyme catalyses ATP + H2O + 4 H(+)(in) = ADP + phosphate + 5 H(+)(out). Functionally, produces ATP from ADP in the presence of a proton gradient across the membrane. The alpha chain is a regulatory subunit. This is ATP synthase subunit alpha, chloroplastic from Aethionema grandiflorum (Persian stone-cress).